The chain runs to 214 residues: Adenylate kinase (214 aa).

Residue 10 to 15 (GAGKGT) participates in ATP binding. Positions 30–59 (STGDMLRAAVKSGSELGKQAKDIMDAGKLV) are NMP. AMP-binding positions include Thr-31, Arg-36, 57-59 (KLV), 85-88 (GFPR), and Gln-92. The segment at 122 to 159 (GRRVHAPSGRVYHVKFNPPKVEGKDDVTGEELTTRKDD) is LID. ATP is bound by residues Arg-123 and 132 to 133 (VY). 2 residues coordinate AMP: Arg-156 and Arg-167. Position 192 is an N6-acetyllysine (Lys-192). Residue Lys-200 coordinates ATP.

This sequence belongs to the adenylate kinase family. Monomer.

The protein resides in the cytoplasm. It catalyses the reaction AMP + ATP = 2 ADP. The protein operates within purine metabolism; AMP biosynthesis via salvage pathway; AMP from ADP: step 1/1. Functionally, catalyzes the reversible transfer of the terminal phosphate group between ATP and AMP. Plays an important role in cellular energy homeostasis and in adenine nucleotide metabolism. The chain is Adenylate kinase from Escherichia coli O8 (strain IAI1).